We begin with the raw amino-acid sequence, 190 residues long: Potassium-transporting ATPase KdpC subunit (190 aa).

The chain crosses the membrane as a helical span at residues 13 to 33; that stretch reads LLLILTLITGILYPIVTTGFA.

Belongs to the KdpC family. The system is composed of three essential subunits: KdpA, KdpB and KdpC.

It localises to the cell inner membrane. In terms of biological role, part of the high-affinity ATP-driven potassium transport (or Kdp) system, which catalyzes the hydrolysis of ATP coupled with the electrogenic transport of potassium into the cytoplasm. This subunit acts as a catalytic chaperone that increases the ATP-binding affinity of the ATP-hydrolyzing subunit KdpB by the formation of a transient KdpB/KdpC/ATP ternary complex. In Leptospira interrogans serogroup Icterohaemorrhagiae serovar copenhageni (strain Fiocruz L1-130), this protein is Potassium-transporting ATPase KdpC subunit.